The chain runs to 518 residues: Probable carboxypeptidase 2 (518 aa).

Positions Met-1–Ala-21 are cleaved as a signal peptide. A glycan (N-linked (GlcNAc...) asparagine) is linked at Asn-46. Residues Pro-53–Glu-76 are disordered. In terms of domain architecture, Peptidase M14 spans Gly-71 to Ala-351. A glycan (N-linked (GlcNAc...) asparagine) is linked at Asn-116. Zn(2+) is bound by residues His-136, Glu-139, and His-224. Glu-322 (proton donor/acceptor) is an active-site residue. N-linked (GlcNAc...) asparagine glycans are attached at residues Asn-393 and Asn-459.

It belongs to the peptidase M14 family. It depends on Zn(2+) as a cofactor.

Its subcellular location is the secreted. Its function is as follows. Extracellular metalloprotease that contributes to pathogenicity. The protein is Probable carboxypeptidase 2 (MCPB) of Trichophyton verrucosum (strain HKI 0517).